Consider the following 434-residue polypeptide: Probable G-protein coupled receptor 150 (434 aa).

Residues Met1–Asp3 are Extracellular-facing. A helical membrane pass occupies residues Leu4–Trp24. Over Gly25–Arg43 the chain is Cytoplasmic. A helical membrane pass occupies residues Val44–Leu64. Over Cys65 to Lys81 the chain is Extracellular. The helical transmembrane segment at Met82–Leu102 threads the bilayer. At Ser103–Arg162 the chain is on the cytoplasmic side. Residues Ala163–Val183 form a helical membrane-spanning segment. Topologically, residues Arg184–Ala237 are extracellular. Residues Pro188–Ala210 form a disordered region. Residues Ser189–Pro205 show a composition bias toward pro residues. A helical transmembrane segment spans residues Val238–Val258. At Trp259–Ser293 the chain is on the cytoplasmic side. The helical transmembrane segment at Leu294 to Ala314 threads the bilayer. Over Arg315–Ser334 the chain is Extracellular. A helical transmembrane segment spans residues Ala335–Phe355. At Gln356 to Phe434 the chain is on the cytoplasmic side. Residues Trp398–Arg407 are compositionally biased toward basic residues. Residues Trp398–Phe434 are disordered. Pro residues predominate over residues Arg417–Leu426.

This sequence belongs to the G-protein coupled receptor 1 family.

The protein localises to the cell membrane. Orphan receptor. This chain is Probable G-protein coupled receptor 150 (GPR150), found in Homo sapiens (Human).